A 318-amino-acid chain; its full sequence is Ubiquinol oxidase (318 aa).

A helical transmembrane segment spans residues 150-170; the sequence is VVVLETVAAIPGMVGGMFRHL. The Fe cation site is built by Glu154, Glu193, and His196. The chain crosses the membrane as a helical span at residues 212-232; sequence MLIKLGQFLFFNGYMVFYFVA. The Fe cation site is built by Glu244, Glu295, and His298.

This sequence belongs to the alternative oxidase family. As to quaternary structure, found as monomers and homodimers. It depends on Fe cation as a cofactor.

It is found in the mitosome membrane. It carries out the reaction 2 a ubiquinol + O2 = 2 a ubiquinone + 2 H2O. In terms of biological role, alternative oxidase which function may be to reoxidize reducing equivalents produced by glycolysis such as ubiquinol. The protein is Ubiquinol oxidase (AOX) of Trachipleistophora hominis (Microsporidian parasite).